A 371-amino-acid chain; its full sequence is Putative HAD-like hydrolase Noc_2718 (371 aa).

An HAD-like hydrolase region spans residues methionine 1–glutamate 288. Residues glutamine 291–serine 371 enclose the YcgL domain.

It in the N-terminal section; belongs to the HAD-like hydrolase superfamily.

The sequence is that of Putative HAD-like hydrolase Noc_2718 from Nitrosococcus oceani (strain ATCC 19707 / BCRC 17464 / JCM 30415 / NCIMB 11848 / C-107).